The sequence spans 61 residues: Small ribosomal subunit protein uS14 (61 aa).

Residues cysteine 24, cysteine 27, cysteine 40, and cysteine 43 each contribute to the Zn(2+) site.

The protein belongs to the universal ribosomal protein uS14 family. Zinc-binding uS14 subfamily. In terms of assembly, part of the 30S ribosomal subunit. Contacts proteins S3 and S10. Requires Zn(2+) as cofactor.

Functionally, binds 16S rRNA, required for the assembly of 30S particles and may also be responsible for determining the conformation of the 16S rRNA at the A site. This chain is Small ribosomal subunit protein uS14, found in Frankia alni (strain DSM 45986 / CECT 9034 / ACN14a).